The sequence spans 343 residues: Nuclear distribution protein nudE-like 1 (343 aa).

The stretch at 25–190 (KYKQSFQEAR…LAVRERQQEV (166 aa)) forms a coiled coil. Disordered stretches follow at residues 184-204 (RERQ…LDCE) and 322-343 (QGTP…PLSV).

It belongs to the nudE family. In terms of processing, phosphorylated in mitosis.

The protein localises to the cytoplasm. It is found in the cytoskeleton. It localises to the microtubule organizing center. Its subcellular location is the centrosome. The protein resides in the spindle. Functionally, required for organization of the cellular microtubule array and microtubule anchoring at the centrosome. Positively regulates the activity of the minus-end directed microtubule motor protein dynein. May enhance dynein-mediated microtubule sliding by targeting dynein to the microtubule plus end. Positively regulates lysosome peripheral distribution and ruffled border formation in osteoclasts. This chain is Nuclear distribution protein nudE-like 1 (NDEL1), found in Gallus gallus (Chicken).